A 401-amino-acid polypeptide reads, in one-letter code: MPRNIVVEEIVRTPVEMQKVELVERKGVGHPDSIADGIAEAVSRALSKEYIKRYGIILHHNTDQVEVVGGRAYPRFGGGEVVKPIYILLSGRAVELVDQELFPVHEVAIRAAKDYLNNTIRHLDVENHVVIDSRIGQGSVDLVSVFNKAKENPIPLANDTSFGVGFAPLTETERLVLETERLLNSEKFKKELPAVGEDVKVMGLRKGDEIDLTIAAAIVDSEVSGPKEYLEVKDKIREAVEELASDVTSRKVNVYVNTADDPDSGIFYITVTGTSAEAGDDGSVGRGNRVNGLITPNRHMSLEAAAGKNPVSHVGKIYNLLAMFIANEIAETLPVEEVYVRILSQIGKPIDQPLIASIQIIPKQGHSVKEFEKDAYAIADNWLANITKIQKMILEGKVSVF.

136–141 (GQGSVD) lines the ATP pocket.

It belongs to the AdoMet synthase 2 family. The cofactor is Mg(2+).

It catalyses the reaction L-methionine + ATP + H2O = S-adenosyl-L-methionine + phosphate + diphosphate. Its pathway is amino-acid biosynthesis; S-adenosyl-L-methionine biosynthesis; S-adenosyl-L-methionine from L-methionine: step 1/1. Catalyzes the formation of S-adenosylmethionine from methionine and ATP. This is S-adenosylmethionine synthase (mat) from Pyrococcus horikoshii (strain ATCC 700860 / DSM 12428 / JCM 9974 / NBRC 100139 / OT-3).